The primary structure comprises 175 residues: uncharacterized protein (175 aa).

The DNL-type zinc-finger motif lies at 71–166 (QPKPTYNVSF…KPPQFKIRPA (96 aa)). Residues C82, C85, C107, and C110 each coordinate Zn(2+).

This is an uncharacterized protein from Schizosaccharomyces pombe (strain 972 / ATCC 24843) (Fission yeast).